The primary structure comprises 230 residues: Ribose-5-phosphate isomerase A (230 aa).

Substrate-binding positions include Thr32 to Thr35, Asp85 to Asp88, and Lys98 to Gly101. The active-site Proton acceptor is the Glu107. Lys125 is a substrate binding site.

The protein belongs to the ribose 5-phosphate isomerase family. In terms of assembly, homodimer.

The catalysed reaction is aldehydo-D-ribose 5-phosphate = D-ribulose 5-phosphate. It participates in carbohydrate degradation; pentose phosphate pathway; D-ribose 5-phosphate from D-ribulose 5-phosphate (non-oxidative stage): step 1/1. In terms of biological role, catalyzes the reversible conversion of ribose-5-phosphate to ribulose 5-phosphate. The sequence is that of Ribose-5-phosphate isomerase A from Burkholderia ambifaria (strain MC40-6).